The primary structure comprises 204 residues: Putative AgrB-like protein (204 aa).

4 consecutive transmembrane segments (helical) span residues 40 to 60 (IILINVMKFAIVYGISLATGL), 87 to 107 (LNCTLISLAMFVLAPFVFQNI), 111 to 131 (NWIVLGTFAFILLNMFLFAPA), and 156 to 176 (LILTGIALLIPFAEMKTLIMV).

The protein belongs to the AgrB family.

It localises to the cell membrane. Functionally, may be involved in the proteolytic processing of a quorum sensing system signal molecule precursor. The chain is Putative AgrB-like protein from Listeria welshimeri serovar 6b (strain ATCC 35897 / DSM 20650 / CCUG 15529 / CIP 8149 / NCTC 11857 / SLCC 5334 / V8).